We begin with the raw amino-acid sequence, 503 residues long: Variant surface glycoprotein ILTAT 1.3 (503 aa).

An N-terminal signal peptide occupies residues 1–29 (MTKAYENRMLLQALVLAAVLCTTHAEGTA). 2 disulfides stabilise this stretch: Cys42–Cys168 and Cys150–Cys206. N-linked (GlcNAc...) asparagine glycans are attached at residues Asn419 and Asn432. The GPI-anchor amidated aspartate moiety is linked to residue Asp480. Positions 481–503 (SSFILNKQFALSVVSAAFAALLF) are cleaved as a propeptide — removed in mature form.

It is found in the cell membrane. Functionally, VSG forms a coat on the surface of the parasite. The trypanosome evades the immune response of the host by expressing a series of antigenically distinct VSGs from an estimated 1000 VSG genes. In Trypanosoma brucei brucei, this protein is Variant surface glycoprotein ILTAT 1.3.